A 523-amino-acid chain; its full sequence is ATP synthase subunit beta, mitochondrial (523 aa).

The transit peptide at 1-19 (MFSRVAKTSFSAVRAAKSQ) directs the protein to the mitochondrion. Residue 201-208 (GGAGVGKT) coordinates ATP.

The protein belongs to the ATPase alpha/beta chains family. As to quaternary structure, F-type ATPases have 2 components, CF(1) - the catalytic core - and CF(0) - the membrane proton channel. CF(1) has five subunits: alpha(3), beta(3), gamma(1), delta(1), epsilon(1). CF(0) has three main subunits: a, b and c.

It is found in the mitochondrion. The protein localises to the mitochondrion inner membrane. The enzyme catalyses ATP + H2O + 4 H(+)(in) = ADP + phosphate + 5 H(+)(out). In terms of biological role, mitochondrial membrane ATP synthase (F(1)F(0) ATP synthase or Complex V) produces ATP from ADP in the presence of a proton gradient across the membrane which is generated by electron transport complexes of the respiratory chain. F-type ATPases consist of two structural domains, F(1) - containing the extramembraneous catalytic core, and F(0) - containing the membrane proton channel, linked together by a central stalk and a peripheral stalk. During catalysis, ATP synthesis in the catalytic domain of F(1) is coupled via a rotary mechanism of the central stalk subunits to proton translocation. Subunits alpha and beta form the catalytic core in F(1). Rotation of the central stalk against the surrounding alpha(3)beta(3) subunits leads to hydrolysis of ATP in three separate catalytic sites on the beta subunits. The polypeptide is ATP synthase subunit beta, mitochondrial (Hemicentrotus pulcherrimus (Sea urchin)).